The following is a 288-amino-acid chain: DegV domain-containing protein DR_1903 (288 aa).

A DegV domain is found at Ile2–Pro280. Hexadecanoate-binding residues include Thr59 and Thr93.

Functionally, may bind long-chain fatty acids, such as palmitate, and may play a role in lipid transport or fatty acid metabolism. This is DegV domain-containing protein DR_1903 from Deinococcus radiodurans (strain ATCC 13939 / DSM 20539 / JCM 16871 / CCUG 27074 / LMG 4051 / NBRC 15346 / NCIMB 9279 / VKM B-1422 / R1).